Reading from the N-terminus, the 233-residue chain is UPF0758 protein RoseRS_0767 (233 aa).

The 123-residue stretch at 107–229 folds into the MPN domain; that stretch reads LIRSPTDAAQ…FVSMRERGLG (123 aa). Residues H178, H180, and D191 each contribute to the Zn(2+) site. The JAMM motif motif lies at 178 to 191; that stretch reads HNHPSGDPTPSPED.

It belongs to the UPF0758 family.

The sequence is that of UPF0758 protein RoseRS_0767 from Roseiflexus sp. (strain RS-1).